A 251-amino-acid chain; its full sequence is MGIRRIGLVVPSSNVTVETEMPALLSRHPGAEFSFHSTRMRMHTVSPEGLAAMNAQRERCVLEIADAAPEVILYACLVAVMVGGPGEHHRVESAVAEQLATGGSQALVRSSAGALVEGLRALDAQRVALVTPYMRPLAEKVVAYLEAEGFTISDWRALEVADNTEVGCIPGEQVMAAARSLDLSEVDALVISCCVQMPSLPLVETAEREFGIPVLSAATAGAYSILRSLDLPVAVPGAGRLLRQDSAVTAS.

Substrate contacts are provided by residues asparagine 14, 76–78 (CLV), tyrosine 133, and asparagine 163. Cysteine 76 acts as the Nucleophile in catalysis. Cysteine 76 carries the post-translational modification S-(2-succinyl)cysteine. Cysteine 194 serves as the catalytic Proton donor. 195–196 (VQ) is a substrate binding site.

It belongs to the maleate isomerase family. Homodimer.

The enzyme catalyses maleate = fumarate. In terms of biological role, catalyzes cis-trans isomerization of the C2-C3 double bond in maleate to yield fumarate. Shows a strict specificity for maleate, with no activity detected toward structurally related substrates including citraconate, mesaconate, dimethylmaleate, and maleamide. The sequence is that of Maleate isomerase from Nocardia farcinica (strain IFM 10152).